A 203-amino-acid chain; its full sequence is Ras-related protein Rab-24 (203 aa).

The residue at position 17 (tyrosine 17) is a Phosphotyrosine. GTP-binding residues include glycine 19, lysine 20, threonine 21, and threonine 40. Residues threonine 21, threonine 40, and aspartate 63 each contribute to the Mg(2+) site. The switch I stretch occupies residues 30 to 45; it reads DRFLVGPYQNTIGAAF. Residues 63–80 form a switch II region; sequence DTAGSERYEAMSRIYYRG. GTP contacts are provided by glycine 66, lysine 121, aspartate 123, and lysine 156. Tyrosine 172 carries the post-translational modification Phosphotyrosine. 2 S-geranylgeranyl cysteine lipidation sites follow: cysteine 200 and cysteine 201.

Belongs to the small GTPase superfamily. Rab family. As to quaternary structure, interacts with ZFYVE20. Does not interact with the GDP dissociation inhibitors ARHGDIA and ARHGDIB. It depends on Mg(2+) as a cofactor. Prenylated; prenylation is required for RAB24 localization to autophagosomes. Isoprenylation is inefficient compared to other Rab family members. In terms of processing, phosphorylated at Tyr-17 and Tyr-172. Cytosolic pool of RAB24 is more phosphorylated than the membrane-associated pool. Widely expressed, with highest expression in brain.

The protein localises to the cytoplasm. The protein resides in the cytosol. Its subcellular location is the membrane. It localises to the cytoplasmic vesicle. It is found in the autophagosome membrane. The protein localises to the perinuclear region. The protein resides in the cytoskeleton. Its subcellular location is the spindle. The enzyme catalyses GTP + H2O = GDP + phosphate + H(+). Regulated by guanine nucleotide exchange factors (GEFs) which promote the exchange of bound GDP for free GTP. Regulated by GTPase activating proteins (GAPs) which increase the GTP hydrolysis activity. Inhibited by GDP dissociation inhibitors (GDIs). The small GTPases Rab are key regulators of intracellular membrane trafficking, from the formation of transport vesicles to their fusion with membranes. Rabs cycle between an inactive GDP-bound form and an active GTP-bound form that is able to recruit to membranes different sets of downstream effectors directly responsible for vesicle formation, movement, tethering and fusion. RAB24 is an atypical RAB protein that presents low GTPase activity and thereby exists predominantly in the GTP-bound active state. RAB24 is required for the clearance of late autophagic vacuoles under basal conditions. It is not needed for starvation-induced autophagy. Involved in the modulation of meiotic apparatus assembly and meiotic progression during oocyte maturation, possibly through regulation of kinetochore-microtubule interaction. This is Ras-related protein Rab-24 from Mus musculus (Mouse).